We begin with the raw amino-acid sequence, 526 residues long: Cytochrome P450 monooxygenase SAT11 (526 aa).

The helical transmembrane segment at 18 to 38 (AFLLIAMLYLGYLLCICFYNI) threads the bilayer. Residues N125 and N447 are each glycosylated (N-linked (GlcNAc...) asparagine). A heme-binding site is contributed by C455. N520 carries an N-linked (GlcNAc...) asparagine glycan.

This sequence belongs to the cytochrome P450 family. It depends on heme as a cofactor.

Its subcellular location is the membrane. Its pathway is mycotoxin biosynthesis. Functionally, cytochrome P450 monooxygenase; part of the satratoxin SC2 cluster involved in the biosynthesis of satratoxins, trichothecene mycotoxins that are associated with human food poisonings. Satratoxins are suggested to be made by products of multiple gene clusters (SC1, SC2 and SC3) that encode 21 proteins in all, including polyketide synthases, acetyltransferases, and other enzymes expected to modify the trichothecene skeleton. SC1 encodes 10 proteins, SAT1 to SAT10. The largest are SAT8, which encodes a putative polyketide synthase (PKS) with a conventional non-reducing architecture, and SAT10, a putative protein containing four ankyrin repeats and thus may be involved in protein scaffolding. The putative short-chain reductase SAT3 may assist the PKS in some capacity. SAT6 contains a secretory lipase domain and acts probably as a trichothecene esterase. SAT5 encodes a putative acetyltransferase, and so, with SAT6, may affect endogenous protection from toxicity. The probable transcription factor SAT9 may regulate the expression of the SC1 cluster. SC2 encodes proteins SAT11 to SAT16, the largest of which encodes the putative reducing PKS SAT13. SAT11 is a cytochrome P450 monooxygenase, while SAT14 and SAT16 are probable acetyltransferases. The SC2 cluster may be regulated by the transcription factor SAT15. SC3 is a small cluster that encodes 5 proteins, SAT17 to SAT21. SAT21 is a putative MFS-type transporter which may have a role in exporting secondary metabolites. The four other proteins putatively encoded in SC3 include the taurine hydroxylase-like protein SAT17, the O-methyltransferase SAT18, the acetyltransferase SAT19, and the Cys6-type zinc finger SAT20, the latter being probably involved in regulation of SC3 expression. In Stachybotrys chartarum (strain CBS 109288 / IBT 7711) (Toxic black mold), this protein is Cytochrome P450 monooxygenase SAT11.